The sequence spans 451 residues: Phosphoglucosamine mutase (451 aa).

Catalysis depends on S104, which acts as the Phosphoserine intermediate. The Mg(2+) site is built by S104, D242, D244, and D246. Position 104 is a phosphoserine (S104).

The protein belongs to the phosphohexose mutase family. Mg(2+) is required as a cofactor. Activated by phosphorylation.

The catalysed reaction is alpha-D-glucosamine 1-phosphate = D-glucosamine 6-phosphate. Catalyzes the conversion of glucosamine-6-phosphate to glucosamine-1-phosphate. The chain is Phosphoglucosamine mutase from Kocuria rhizophila (strain ATCC 9341 / DSM 348 / NBRC 103217 / DC2201).